The following is a 766-amino-acid chain: Polyribonucleotide nucleotidyltransferase (766 aa).

Asp490 and Asp496 together coordinate Mg(2+). The region spanning 557–616 (PKIDTITIPVDKIKVVIGKGGEQIDKIIAETGVKIDIDDEGLCSIFSSDQSAIDRAKEII) is the KH domain. The 69-residue stretch at 626–694 (GEVYEAKVVR…DKGRVDASMR (69 aa)) folds into the S1 motif domain. Composition is skewed to basic and acidic residues over residues 700–734 (PEGY…DRNN) and 744–766 (FELR…KKPE). The interval 700–766 (PEGYVEPERK…FPELSTKKPE (67 aa)) is disordered.

It belongs to the polyribonucleotide nucleotidyltransferase family. It depends on Mg(2+) as a cofactor.

It is found in the cytoplasm. The catalysed reaction is RNA(n+1) + phosphate = RNA(n) + a ribonucleoside 5'-diphosphate. In terms of biological role, involved in mRNA degradation. Catalyzes the phosphorolysis of single-stranded polyribonucleotides processively in the 3'- to 5'-direction. This Lactococcus lactis subsp. cremoris (strain MG1363) protein is Polyribonucleotide nucleotidyltransferase.